Here is a 240-residue protein sequence, read N- to C-terminus: PF03932 family protein CutC (240 aa).

It belongs to the CutC family.

It is found in the cytoplasm. This chain is PF03932 family protein CutC, found in Xanthomonas campestris pv. campestris (strain 8004).